The primary structure comprises 849 residues: Rho guanine nucleotide exchange factor 15 (849 aa).

3 disordered regions span residues 1 to 146 (MSAQ…ASAP), 159 to 202 (GAEG…NGTP), and 277 to 308 (LPPLKPPKPTKVRQDISTSEELPQPDLKLPSE). Residues 18 to 31 (RIIRPRPPSRHRAP) show a composition bias toward basic residues. Positions 48 to 59 (QISNDASASVCT) are enriched in polar residues. Over residues 65-110 (PPTASLKPPALLPPSVSRTSLDSQTSPDSPSSTPSPSPVSRRSISP) the composition is skewed to low complexity. A phosphoserine mark is found at serine 107 and serine 109. Over residues 111–123 (EPAPCSPVPPPKP) the composition is skewed to pro residues. Polar residues predominate over residues 164–180 (AQSSDSLERCSQGSTEV). Tyrosine 361 carries the phosphotyrosine; by EPHB2 modification. The DH domain maps to 425-609 (RMQESLFEVV…SKIIERCSAE (185 aa)). 2 stretches are compositionally biased toward polar residues: residues 771–786 (CSEPSTPSKTEGQSLE) and 840–849 (SSGTPDTPQP). Disordered stretches follow at residues 771–803 (CSEPSTPSKTEGQSLESKAPRKHLHKNPEGWLK) and 819–849 (GEHERRKHLRQHQKLLEAVGPSSGTPDTPQP).

In terms of assembly, interacts with EPHA4. Interacts with EPHB2. In terms of processing, phosphorylated on tyrosine residues upon EFNA1 stimulation. EPHB2-dependent phosphorylation at Tyr-361 triggers UBE3A-mediated ubiquitination. Post-translationally, ubiquitinated; UBE3A-mediated ubiquitination and degradation by the proteasome promotes EFNB1-dependent synapse formation. As to expression, at P12, expressed is detected in the CA1 region and the dentate gyrus of the hippocampus.

Its subcellular location is the cell projection. The protein localises to the dendrite. Functionally, specific GEF for RhoA activation. Does not activate RAC1 or CDC42. Regulates vascular smooth muscle contractility. Negatively regulates excitatory synapse development by suppressing the synapse-promoting activity of EPHB2. In Mus musculus (Mouse), this protein is Rho guanine nucleotide exchange factor 15 (Arhgef15).